Reading from the N-terminus, the 341-residue chain is L-threonine 3-dehydrogenase (341 aa).

Cys38 contributes to the Zn(2+) binding site. Residues Thr40 and His43 each act as charge relay system in the active site. Residues His63, Glu64, Cys93, Cys96, Cys99, and Cys107 each coordinate Zn(2+). NAD(+) is bound by residues Ile175, Asp195, Arg200, Leu262–Ile264, and Ile286–Tyr287.

This sequence belongs to the zinc-containing alcohol dehydrogenase family. In terms of assembly, homotetramer. Zn(2+) serves as cofactor.

It localises to the cytoplasm. It carries out the reaction L-threonine + NAD(+) = (2S)-2-amino-3-oxobutanoate + NADH + H(+). It functions in the pathway amino-acid degradation; L-threonine degradation via oxydo-reductase pathway; glycine from L-threonine: step 1/2. In terms of biological role, catalyzes the NAD(+)-dependent oxidation of L-threonine to 2-amino-3-ketobutyrate. This is L-threonine 3-dehydrogenase from Serratia proteamaculans (strain 568).